Reading from the N-terminus, the 1026-residue chain is Multidrug resistance protein MdtC (1026 aa).

11 helical membrane passes run 15 to 35, 333 to 353, 360 to 380, 387 to 407, 431 to 451, 463 to 483, 528 to 548, 853 to 873, 897 to 917, 953 to 973, and 984 to 1004; these read ILIA…LPVA, EVEE…FLFL, LIPA…MYLC, LSLM…IVVL, VGFT…PLLL, FAVT…TLTP, LVGV…IAIP, LILI…LYES, LFNA…IGIV, PIMM…LSGG, and ITIV…TPVV.

Belongs to the resistance-nodulation-cell division (RND) (TC 2.A.6) family. MdtC subfamily. In terms of assembly, part of a tripartite efflux system composed of MdtA, MdtB and MdtC. MdtC forms a heteromultimer with MdtB.

It localises to the cell inner membrane. The sequence is that of Multidrug resistance protein MdtC from Salmonella newport (strain SL254).